The chain runs to 442 residues: uncharacterized protein (442 aa).

The 238-residue stretch at 1-238 (MKAEGLSGGY…QSIKAVYDTD (238 aa)) folds into the ABC transporter domain. 33 to 40 (GPNGSGKT) is an ATP binding site.

It belongs to the ABC transporter superfamily. In terms of assembly, the complex is composed of two ATP-binding proteins (YvrA), two transmembrane proteins (YvrB) and a solute-binding protein (YvrC).

In terms of biological role, probably part of an ABC transporter complex. Probably responsible for energy coupling to the transport system. This is an uncharacterized protein from Bacillus subtilis (strain 168).